The following is a 424-amino-acid chain: Phosphoribosylamine--glycine ligase (424 aa).

Residues 111–312 (KAFVKECGIK…LLDLFLATAK (202 aa)) enclose the ATP-grasp domain. ATP is bound at residue 137–189 (IQNASFPLVIKALNKNTSIVHHQEEALKILEDALKQSNEPVIIEPFLEGFELS).

This sequence belongs to the GARS family.

It carries out the reaction 5-phospho-beta-D-ribosylamine + glycine + ATP = N(1)-(5-phospho-beta-D-ribosyl)glycinamide + ADP + phosphate + H(+). Its pathway is purine metabolism; IMP biosynthesis via de novo pathway; N(1)-(5-phospho-D-ribosyl)glycinamide from 5-phospho-alpha-D-ribose 1-diphosphate: step 2/2. This chain is Phosphoribosylamine--glycine ligase (purD), found in Helicobacter pylori (strain J99 / ATCC 700824) (Campylobacter pylori J99).